We begin with the raw amino-acid sequence, 214 residues long: Charged multivesicular body protein 2b (214 aa).

Residues 16 to 55 (EQNKELRGTQRAITRDRAALEKQEKQLEMEIKKMAKAGNK) are a coiled coil. Residues 178–203 (MAKAPSAAKGLPSTSASKSSGISDEE) are disordered. Residues 189–199 (PSTSASKSSGI) show a composition bias toward polar residues. Positions 202–212 (EEIERQLKALG) match the MIT-interacting motif motif.

It belongs to the SNF7 family. As to quaternary structure, probable core component of the endosomal sorting required for transport complex III (ESCRT-III). ESCRT-III components are thought to multimerize to form a flat lattice on the perimeter membrane of the endosome.

The protein resides in the cytoplasm. Its subcellular location is the cytosol. It is found in the late endosome membrane. Its function is as follows. Probable core component of the endosomal sorting required for transport complex III (ESCRT-III) which is involved in multivesicular bodies (MVBs) formation and sorting of endosomal cargo proteins into MVBs. MVBs contain intraluminal vesicles (ILVs) that are generated by invagination and scission from the limiting membrane of the endosome and mostly are delivered to lysosomes enabling degradation of membrane proteins, such as stimulated growth factor receptors, lysosomal enzymes and lipids. In Xenopus tropicalis (Western clawed frog), this protein is Charged multivesicular body protein 2b (chmp2b).